Consider the following 412-residue polypeptide: UDP-galactose transporter homolog 1 (412 aa).

A helical membrane pass occupies residues 3–23; sequence VLRLAVCISGVYAAFLLWAIA. A disordered region spans residues 31–51; the sequence is FPSVHPHPHQQPHSPSDPPPG. 4 helical membrane-spanning segments follow: residues 58–78, 139–159, 197–217, and 222–242; these read LFLN…YLSF, LLAL…IGFL, YIVV…AETS, and GGSD…IDGL. An N-linked (GlcNAc...) asparagine glycan is attached at N244. Transmembrane regions (helical) follow at residues 262-282, 325-345, 355-375, and 379-399; these read MMFT…VLPL, SALA…LFIF, TLVM…VVVF, and LTKG…VEAG.

The protein belongs to the nucleotide-sugar transporter family. SLC35B subfamily.

It localises to the endoplasmic reticulum membrane. In terms of biological role, may be involved in specific transport of UDP-Gal from the cytosol to the Golgi lumen. Involved in the maintenance of optimal conditions for the folding of secretory pathway proteins in the endoplasmic reticulum. This chain is UDP-galactose transporter homolog 1 (HUT1-A), found in Cryptococcus neoformans var. neoformans serotype D (strain JEC21 / ATCC MYA-565) (Filobasidiella neoformans).